Here is a 282-residue protein sequence, read N- to C-terminus: Hydroxyethylthiazole kinase 2 (282 aa).

Residue methionine 44 participates in substrate binding. Positions 120 and 179 each coordinate ATP. Glycine 206 provides a ligand contact to substrate.

The protein belongs to the Thz kinase family. The cofactor is Mg(2+).

The catalysed reaction is 5-(2-hydroxyethyl)-4-methylthiazole + ATP = 4-methyl-5-(2-phosphooxyethyl)-thiazole + ADP + H(+). It participates in cofactor biosynthesis; thiamine diphosphate biosynthesis; 4-methyl-5-(2-phosphoethyl)-thiazole from 5-(2-hydroxyethyl)-4-methylthiazole: step 1/1. Catalyzes the phosphorylation of the hydroxyl group of 4-methyl-5-beta-hydroxyethylthiazole (THZ). This is Hydroxyethylthiazole kinase 2 from Methanosphaera stadtmanae (strain ATCC 43021 / DSM 3091 / JCM 11832 / MCB-3).